The primary structure comprises 219 residues: Octanoyltransferase (219 aa).

Positions 32–207 (ADSGDEIWLL…HLVRQLGYAQ (176 aa)) constitute a BPL/LPL catalytic domain. Substrate contacts are provided by residues 71 to 78 (RGGQVTYH), 138 to 140 (SLG), and 151 to 153 (GLA). The active-site Acyl-thioester intermediate is the C169.

It belongs to the LipB family.

The protein resides in the cytoplasm. The catalysed reaction is octanoyl-[ACP] + L-lysyl-[protein] = N(6)-octanoyl-L-lysyl-[protein] + holo-[ACP] + H(+). It participates in protein modification; protein lipoylation via endogenous pathway; protein N(6)-(lipoyl)lysine from octanoyl-[acyl-carrier-protein]: step 1/2. Catalyzes the transfer of endogenously produced octanoic acid from octanoyl-acyl-carrier-protein onto the lipoyl domains of lipoate-dependent enzymes. Lipoyl-ACP can also act as a substrate although octanoyl-ACP is likely to be the physiological substrate. The chain is Octanoyltransferase from Stutzerimonas stutzeri (strain A1501) (Pseudomonas stutzeri).